The chain runs to 145 residues: Large ribosomal subunit protein uL16 (145 aa).

The protein belongs to the universal ribosomal protein uL16 family. In terms of assembly, part of the 50S ribosomal subunit.

Binds 23S rRNA and is also seen to make contacts with the A and possibly P site tRNAs. The polypeptide is Large ribosomal subunit protein uL16 (Lactobacillus johnsonii (strain CNCM I-12250 / La1 / NCC 533)).